The following is a 185-amino-acid chain: Large ribosomal subunit protein uL6 (185 aa).

The protein belongs to the universal ribosomal protein uL6 family. In terms of assembly, part of the 50S ribosomal subunit.

This protein binds to the 23S rRNA, and is important in its secondary structure. It is located near the subunit interface in the base of the L7/L12 stalk, and near the tRNA binding site of the peptidyltransferase center. The sequence is that of Large ribosomal subunit protein uL6 from Staphylothermus marinus (strain ATCC 43588 / DSM 3639 / JCM 9404 / F1).